Reading from the N-terminus, the 120-residue chain is uncharacterized protein (120 aa).

The protein belongs to the HesB/IscA family.

This is an uncharacterized protein from Bacillus subtilis (strain 168).